Consider the following 684-residue polypeptide: Poly(A) RNA polymerase cid14 (684 aa).

3 disordered regions span residues Met1–Asp52, Asp64–Glu127, and Trp161–Glu219. Basic and acidic residues-rich tracts occupy residues Glu19–Ser35, Gly73–Gly91, Asp108–Glu127, Ser171–Lys186, and Phe199–Asn210. Asp298 and Asp300 together coordinate Mg(2+). Gly364, Lys389, Ser407, Tyr408, Asn492, and Lys496 together coordinate ATP. The 59-residue stretch at Asn434–Asn492 folds into the PAP-associated domain. The segment at Gly623–Phe684 is disordered. Residues Gln628 to Ser655 show a composition bias toward polar residues. Acidic residues predominate over residues Asp656–Asp672.

The protein belongs to the DNA polymerase type-B-like family. As to quaternary structure, heterooligomer. Component of the TRAMP complex composed of at least cid14, mtr4, and air1. It depends on Mg(2+) as a cofactor. Mn(2+) is required as a cofactor.

It is found in the nucleus. The protein localises to the nucleolus. It catalyses the reaction RNA(n) + ATP = RNA(n)-3'-adenine ribonucleotide + diphosphate. Its function is as follows. Required for 3' polyadenylation of the 5.8S and 25S rRNAs as a prelude to their degradation in the exosome. Involved in the nucleolar organization to ensure faithful chromosome segregation during mitosis. The chain is Poly(A) RNA polymerase cid14 (cid14) from Schizosaccharomyces pombe (strain 972 / ATCC 24843) (Fission yeast).